A 312-amino-acid chain; its full sequence is Porphobilinogen deaminase (312 aa).

At C241 the chain carries S-(dipyrrolylmethanemethyl)cysteine.

It belongs to the HMBS family. Monomer. Requires dipyrromethane as cofactor.

The enzyme catalyses 4 porphobilinogen + H2O = hydroxymethylbilane + 4 NH4(+). It participates in porphyrin-containing compound metabolism; protoporphyrin-IX biosynthesis; coproporphyrinogen-III from 5-aminolevulinate: step 2/4. Its pathway is porphyrin-containing compound metabolism; chlorophyll biosynthesis. Its function is as follows. Tetrapolymerization of the monopyrrole PBG into the hydroxymethylbilane pre-uroporphyrinogen in several discrete steps. This chain is Porphobilinogen deaminase, found in Chlorobaculum tepidum (strain ATCC 49652 / DSM 12025 / NBRC 103806 / TLS) (Chlorobium tepidum).